A 176-amino-acid chain; its full sequence is N-alpha-acetyltransferase NAT5 (176 aa).

The N-acetyltransferase domain maps to 14–176 (NNLGMLTKLA…DAILLKKHIS (163 aa)).

This sequence belongs to the acetyltransferase family. As to quaternary structure, component of the N-terminal acetyltransferase A (NatA) complex, which is composed of ARD1, NAT1 and NAT5.

The protein localises to the cytoplasm. The catalysed reaction is N-terminal L-methionyl-L-alanyl-[protein] + acetyl-CoA = N-terminal N(alpha)-acetyl-L-methionyl-L-alanyl-[protein] + CoA + H(+). The enzyme catalyses N-terminal L-methionyl-L-seryl-[protein] + acetyl-CoA = N-terminal N(alpha)-acetyl-L-methionyl-L-seryl-[protein] + CoA + H(+). It catalyses the reaction N-terminal L-methionyl-L-valyl-[protein] + acetyl-CoA = N-terminal N(alpha)-acetyl-L-methionyl-L-valyl-[protein] + CoA + H(+). It carries out the reaction N-terminal L-methionyl-L-threonyl-[protein] + acetyl-CoA = N-terminal N(alpha)-acetyl-L-methionyl-L-threonyl-[protein] + CoA + H(+). The catalysed reaction is N-terminal L-methionyl-L-lysyl-[protein] + acetyl-CoA = N-terminal N(alpha)-acetyl-L-methionyl-L-lysyl-[protein] + CoA + H(+). The enzyme catalyses N-terminal L-methionyl-L-leucyl-[protein] + acetyl-CoA = N-terminal N(alpha)-acetyl-L-methionyl-L-leucyl-[protein] + CoA + H(+). It catalyses the reaction N-terminal L-methionyl-L-phenylalanyl-[protein] + acetyl-CoA = N-terminal N(alpha)-acetyl-L-methionyl-L-phenylalanyl-[protein] + CoA + H(+). It carries out the reaction N-terminal L-methionyl-L-tyrosyl-[protein] + acetyl-CoA = N-terminal N(alpha)-acetyl-L-methionyl-L-tyrosyl-[protein] + CoA + H(+). Its function is as follows. N-alpha-acetyltransferase that acetylates the N-terminus of proteins that retain their initiating methionine. Has a broad substrate specificity: able to acetylate the initiator methionine of most peptides. Non-essential component of the NatA N-terminal acetyltransferase. The protein is N-alpha-acetyltransferase NAT5 of Saccharomyces cerevisiae (strain ATCC 204508 / S288c) (Baker's yeast).